A 32-amino-acid chain; its full sequence is Glutathione S-transferase 8.2 (32 aa).

A glutathione-binding site is contributed by 21–22 (QS).

This sequence belongs to the GST superfamily. Alpha family. Homodimer. The N-terminus is blocked.

Its subcellular location is the cytoplasm. It carries out the reaction RX + glutathione = an S-substituted glutathione + a halide anion + H(+). Functionally, conjugation of reduced glutathione to a wide number of exogenous and endogenous hydrophobic electrophiles. In Dicentrarchus labrax (European seabass), this protein is Glutathione S-transferase 8.2.